Here is a 207-residue protein sequence, read N- to C-terminus: Small ribosomal subunit protein uS4 (207 aa).

Positions 31–55 (KCKLDSKPGQHGRTSGARTSDYGTQ) are disordered. Residues 42-53 (GRTSGARTSDYG) show a composition bias toward polar residues. Residues 97–157 (SRLDNVVYRM…EQKKKQARIL (61 aa)) form the S4 RNA-binding domain.

Belongs to the universal ribosomal protein uS4 family. Part of the 30S ribosomal subunit. Contacts protein S5. The interaction surface between S4 and S5 is involved in control of translational fidelity.

Its function is as follows. One of the primary rRNA binding proteins, it binds directly to 16S rRNA where it nucleates assembly of the body of the 30S subunit. In terms of biological role, with S5 and S12 plays an important role in translational accuracy. This chain is Small ribosomal subunit protein uS4, found in Paraburkholderia xenovorans (strain LB400).